The primary structure comprises 99 residues: Aspartyl/glutamyl-tRNA(Asn/Gln) amidotransferase subunit C (99 aa).

Belongs to the GatC family. Heterotrimer of A, B and C subunits.

It carries out the reaction L-glutamyl-tRNA(Gln) + L-glutamine + ATP + H2O = L-glutaminyl-tRNA(Gln) + L-glutamate + ADP + phosphate + H(+). It catalyses the reaction L-aspartyl-tRNA(Asn) + L-glutamine + ATP + H2O = L-asparaginyl-tRNA(Asn) + L-glutamate + ADP + phosphate + 2 H(+). Its function is as follows. Allows the formation of correctly charged Asn-tRNA(Asn) or Gln-tRNA(Gln) through the transamidation of misacylated Asp-tRNA(Asn) or Glu-tRNA(Gln) in organisms which lack either or both of asparaginyl-tRNA or glutaminyl-tRNA synthetases. The reaction takes place in the presence of glutamine and ATP through an activated phospho-Asp-tRNA(Asn) or phospho-Glu-tRNA(Gln). This Thermobifida fusca (strain YX) protein is Aspartyl/glutamyl-tRNA(Asn/Gln) amidotransferase subunit C.